A 113-amino-acid polypeptide reads, in one-letter code: Photosystem II reaction center Psb28 protein (113 aa).

This sequence belongs to the Psb28 family. In terms of assembly, part of the photosystem II complex.

Its subcellular location is the cellular thylakoid membrane. This is Photosystem II reaction center Psb28 protein from Prochlorococcus marinus (strain NATL1A).